We begin with the raw amino-acid sequence, 453 residues long: Na(+)/H(+) antiporter NhaA 2 (453 aa).

12 helical membrane-spanning segments follow: residues 23–43, 74–94, 111–131, 139–159, 168–188, 191–211, 214–234, 235–255, 316–336, 345–365, 386–406, and 419–439; these read FLHI…AALI, LHFW…GMEI, LPMA…LSFG, GWAV…ALLG, VFLL…IAFF, GGLD…VIGL, IGVG…LGIL, LTGA…PVTA, VAFG…LSGV, WVMI…IVSV, IMLV…IANL, and LGVL…GVWS.

The protein belongs to the NhaA Na(+)/H(+) (TC 2.A.33) antiporter family.

It localises to the cell inner membrane. The catalysed reaction is Na(+)(in) + 2 H(+)(out) = Na(+)(out) + 2 H(+)(in). Na(+)/H(+) antiporter that extrudes sodium in exchange for external protons. This chain is Na(+)/H(+) antiporter NhaA 2, found in Pseudomonas putida (strain ATCC 47054 / DSM 6125 / CFBP 8728 / NCIMB 11950 / KT2440).